A 71-amino-acid polypeptide reads, in one-letter code: Small ribosomal subunit protein eS17 (71 aa).

It belongs to the eukaryotic ribosomal protein eS17 family.

The polypeptide is Small ribosomal subunit protein eS17 (Pyrobaculum aerophilum (strain ATCC 51768 / DSM 7523 / JCM 9630 / CIP 104966 / NBRC 100827 / IM2)).